A 118-amino-acid chain; its full sequence is Large ribosomal subunit protein uL22 (118 aa).

It belongs to the universal ribosomal protein uL22 family. Part of the 50S ribosomal subunit.

In terms of biological role, this protein binds specifically to 23S rRNA; its binding is stimulated by other ribosomal proteins, e.g. L4, L17, and L20. It is important during the early stages of 50S assembly. It makes multiple contacts with different domains of the 23S rRNA in the assembled 50S subunit and ribosome. Functionally, the globular domain of the protein is located near the polypeptide exit tunnel on the outside of the subunit, while an extended beta-hairpin is found that lines the wall of the exit tunnel in the center of the 70S ribosome. This Leuconostoc citreum (strain KM20) protein is Large ribosomal subunit protein uL22.